The primary structure comprises 356 residues: Ferrochelatase (356 aa).

2 residues coordinate Fe cation: H214 and E295.

The protein belongs to the ferrochelatase family.

The protein resides in the cytoplasm. It carries out the reaction heme b + 2 H(+) = protoporphyrin IX + Fe(2+). Its pathway is porphyrin-containing compound metabolism; protoheme biosynthesis; protoheme from protoporphyrin-IX: step 1/1. Its function is as follows. Catalyzes the ferrous insertion into protoporphyrin IX. This is Ferrochelatase from Paraburkholderia xenovorans (strain LB400).